The following is a 424-amino-acid chain: UDP-N-acetylglucosamine 1-carboxyvinyltransferase (424 aa).

22 to 23 (KN) contributes to the phosphoenolpyruvate binding site. Arg-93 contacts UDP-N-acetyl-alpha-D-glucosamine. Residue Cys-117 is the Proton donor of the active site. 2-(S-cysteinyl)pyruvic acid O-phosphothioketal is present on Cys-117. UDP-N-acetyl-alpha-D-glucosamine is bound by residues 162-165 (KVSV), Asp-307, and Ile-329.

Belongs to the EPSP synthase family. MurA subfamily.

The protein localises to the cytoplasm. It catalyses the reaction phosphoenolpyruvate + UDP-N-acetyl-alpha-D-glucosamine = UDP-N-acetyl-3-O-(1-carboxyvinyl)-alpha-D-glucosamine + phosphate. It participates in cell wall biogenesis; peptidoglycan biosynthesis. In terms of biological role, cell wall formation. Adds enolpyruvyl to UDP-N-acetylglucosamine. This Actinobacillus pleuropneumoniae serotype 7 (strain AP76) protein is UDP-N-acetylglucosamine 1-carboxyvinyltransferase.